A 280-amino-acid chain; its full sequence is Ribosomal RNA-processing protein 7 homolog A (280 aa).

Positions 59-159 (RTLFVLNVPP…SGIHKWISDY (101 aa)) constitute an RRM domain. Phosphoserine is present on S99.

The protein belongs to the RRP7 family. Part of the small subunit (SSU) processome, composed of more than 70 proteins and the RNA chaperone small nucleolar RNA (snoRNA) U3. Interacts with NOL6; required for NOL6 localization to nucleolus. In terms of tissue distribution, expressed in the apical radial glial cells in the developing brain.

It localises to the nucleus. The protein localises to the nucleolus. Its subcellular location is the cell projection. The protein resides in the cilium. It is found in the cytoplasm. It localises to the cytoskeleton. The protein localises to the microtubule organizing center. Its subcellular location is the centrosome. Its function is as follows. Nucleolar protein that is involved in ribosomal RNA (rRNA) processing. Also plays a role in primary cilia resorption, and cell cycle progression in neurogenesis and neocortex development. Part of the small subunit (SSU) processome, first precursor of the small eukaryotic ribosomal subunit. During the assembly of the SSU processome in the nucleolus, many ribosome biogenesis factors, an RNA chaperone and ribosomal proteins associate with the nascent pre-rRNA and work in concert to generate RNA folding, modifications, rearrangements and cleavage as well as targeted degradation of pre-ribosomal RNA by the RNA exosome. In Homo sapiens (Human), this protein is Ribosomal RNA-processing protein 7 homolog A.